Consider the following 348-residue polypeptide: D-alanine--D-alanine ligase (348 aa).

In terms of domain architecture, ATP-grasp spans 132 to 334 (KRVLESIGIP…YPDLIEELVT (203 aa)). 162–217 (LARLTFPIFVKPANMGSSVGISKAQTKVELRKAIQLALTYDSRVLIEQGVVAREIE) contacts ATP. Residues D288, E301, and N303 each contribute to the Mg(2+) site.

It belongs to the D-alanine--D-alanine ligase family. It depends on Mg(2+) as a cofactor. Mn(2+) is required as a cofactor.

The protein localises to the cytoplasm. The enzyme catalyses 2 D-alanine + ATP = D-alanyl-D-alanine + ADP + phosphate + H(+). It functions in the pathway cell wall biogenesis; peptidoglycan biosynthesis. Functionally, cell wall formation. The polypeptide is D-alanine--D-alanine ligase (Streptococcus pyogenes serotype M12 (strain MGAS2096)).